A 153-amino-acid chain; its full sequence is Small ribosomal subunit protein uS13 (153 aa).

The protein belongs to the universal ribosomal protein uS13 family. As to quaternary structure, part of the 30S ribosomal subunit. Forms a loose heterodimer with protein S19. Forms two bridges to the 50S subunit in the 70S ribosome.

Located at the top of the head of the 30S subunit, it contacts several helices of the 16S rRNA. In the 70S ribosome it contacts the 23S rRNA (bridge B1a) and protein L5 of the 50S subunit (bridge B1b), connecting the 2 subunits; these bridges are implicated in subunit movement. This is Small ribosomal subunit protein uS13 from Pyrobaculum calidifontis (strain DSM 21063 / JCM 11548 / VA1).